The primary structure comprises 691 residues: Elongation factor G (691 aa).

The 276-residue stretch at 8–283 folds into the tr-type G domain; the sequence is EDYRNFGIMA…AVVDYLPSPA (276 aa). GTP-binding positions include 17-24, 81-85, and 135-138; these read AHIDAGKT, DTPGH, and NKMD.

It belongs to the TRAFAC class translation factor GTPase superfamily. Classic translation factor GTPase family. EF-G/EF-2 subfamily.

The protein localises to the cytoplasm. Catalyzes the GTP-dependent ribosomal translocation step during translation elongation. During this step, the ribosome changes from the pre-translocational (PRE) to the post-translocational (POST) state as the newly formed A-site-bound peptidyl-tRNA and P-site-bound deacylated tRNA move to the P and E sites, respectively. Catalyzes the coordinated movement of the two tRNA molecules, the mRNA and conformational changes in the ribosome. The polypeptide is Elongation factor G (Methylobacterium sp. (strain 4-46)).